The primary structure comprises 320 residues: Putative HTH-type transcriptional regulatory protein VNG_2112C (320 aa).

Positions 132–189 (LADRREDERLSLGQLASELGVSRRTVSKYEDGMNASIEVAMRLEDLFGGELTAPVDVM) constitute an HTH cro/C1-type domain. A DNA-binding region (H-T-H motif) is located at residues 143–162 (LGQLASELGVSRRTVSKYED).

This chain is Putative HTH-type transcriptional regulatory protein VNG_2112C, found in Halobacterium salinarum (strain ATCC 700922 / JCM 11081 / NRC-1) (Halobacterium halobium).